Here is a 1682-residue protein sequence, read N- to C-terminus: Merozoite surface protein 1 (1682 aa).

An N-terminal signal peptide occupies residues 1-19 (MKIIFFLCSFLFFIINTQC). The interval 68–110 (AVSTQSAKNPPGATVPSGTASTKGAIRSPGAANPSDDSSDSDA) is disordered. Asparagine 233, asparagine 462, asparagine 528, and asparagine 599 each carry an N-linked (GlcNAc...) asparagine glycan. Positions 696 to 729 (SETTEDGGHSTHTLSQSGETEVTEETEETVGHTT) are disordered. Residues asparagine 785, asparagine 881, asparagine 901, asparagine 947, asparagine 1071, and asparagine 1178 are each glycosylated (N-linked (GlcNAc...) asparagine). Positions 870–918 (ITGTSSTSSPGNTTVNTAQSATHSNSQNQQSNASSTNTQNGVAVSSGPA) are disordered. The segment covering 871-909 (TGTSSTSSPGNTTVNTAQSATHSNSQNQQSNASSTNTQN) has biased composition (low complexity). 2 disordered regions span residues 1212 to 1241 (TPPQ…TQIP) and 1433 to 1453 (KEFP…DEQK). The segment covering 1227–1241 (VSGSSGSTKEETQIP) has biased composition (polar residues). Positions 1437–1446 (SSPPTTPPSP) are enriched in pro residues. The N-linked (GlcNAc...) asparagine glycan is linked to asparagine 1569. EGF-like domains follow at residues 1573–1613 (HQCV…VENP) and 1614–1661 (NPTC…IFCS). 6 cysteine pairs are disulfide-bonded: cysteine 1575/cysteine 1586, cysteine 1580/cysteine 1596, cysteine 1598/cysteine 1609, cysteine 1617/cysteine 1630, cysteine 1624/cysteine 1644, and cysteine 1646/cysteine 1660. Serine 1661 is lipidated: GPI-anchor amidated serine. Residues 1662 to 1682 (SSNFLGISFLLILMLILYSFI) constitute a propeptide, removed in mature form.

Forms a complex composed of subunits p83, p30, p38, and p42 which remain non-covalently associated; the complex is formed at the merozoite surface prior to egress from host erythrocytes. Forms a complex composed of processed MSP1 subunits, MSP6 subunit p36 and MSP7; the complex is formed at the merozoite surface prior to egress from host erythrocytes. Within the complex, interacts (via subunit p38) with MSP6 subunit p36 and (via subunits p83, p30 and p38) with MSP7 (via subunit p22). Forms a complex composed of MSP1, MSP6, DBLMSP1 and DBLMSP2. Within the complex, interacts (via subunit p38) with DBLMSP1 and DBLMSP2. Forms a complex composed of MSP1, and rhoptry proteins RhopH3, RAP1 and CLAG9/RhopH3. Within the complex, interacts (via subunits p42 and p19) with RhopH3 (via C-terminus). Forms a complex composed of MSP1, MSP6, MSP7, MSP9 and MSP3; within the complex, MSP6 and MSP9 mediate the binding to the host erythrocyte. Interacts (via subunits p19 and p42) with MSP9; the interaction is direct; MSP1 subunits p19 or p42, and MSP9 form a co-ligand complex that interacts with host SLC4A1/Band 3 protein. May interact with PFD6. Interacts with host spectrin. In terms of assembly, interacts with host glycophorin GYPA in a sialic acid-independent manner. As to quaternary structure, interacts with host proinflammatory cytokine S100P; the interaction blocks S100P inflammatory and chemotactic activities. Interacts with host SLC4A1/Band 3 (via 5ABC region) on the host erythrocyte surface in a sialic acid-independent manner. In terms of processing, the p190 precursor is cleaved by SUB1 prior to merozoite egress into 4 subunits p83, p30, p38, and p42 which remain non-covalently associated. SUB1-mediated proteolytic cleavage occurs in an orderly manner; the first cleavage occurs at the p30/p38 site, followed by cleavage at the p83/p30 site, the last cleavage occurs at the p38/p42 site. The order of cleavage is essential for parasite viability. SUB1-mediated processing is essential for merozoite egress. In a second processing step during erythrocyte invasion, p42 is cleaved by SUB2 into p33 and p19; the latter remains attached to the merozoite surface via its GPI-anchor and is endocytosed during the subsequent ring stage.

It localises to the cell membrane. The protein resides in the secreted. It is found in the vacuole membrane. Its function is as follows. During the asexual blood stage, involved in merozoite egress from host erythrocytes possibly via its interaction with the host cytoskeleton protein spectrin resulting in the destabilization of the host cytoskeleton and thus leading to erythrocyte cell membrane rupture. Involved in the binding to host erythrocytes and is required for host erythrocyte invasion. In terms of biological role, by binding to host proinflammatory cytokine S100P may interfere with host immune responses. Involved in merozoite invasion of host erythrocytes. May play a role in the biogenesis and/or function of the food vacuole during the intraerythrocytic development. This Plasmodium falciparum (isolate ro-33 / Ghana) protein is Merozoite surface protein 1.